An 822-amino-acid polypeptide reads, in one-letter code: AP-1 complex subunit gamma-1 (822 aa).

A disordered region spans residues 597–628 (EIVQTNGETEPAPLETKPPPSGPQPTSQANDL). The GAE domain maps to 702–817 (AGIPSITAYS…QDLAEVNNFP (116 aa)).

This sequence belongs to the adaptor complexes large subunit family. Adaptor protein complex 1 (AP-1) is a heterotetramer composed of two large adaptins (gamma-type subunit AP1G1 and beta-type subunit AP1B1), a medium adaptin (mu-type subunit AP1M1 or AP1M2) and a small adaptin (sigma-type subunit AP1S1 or AP1S2 or AP1S3). Interacts (via GAE domain) with RABEP1. Interacts with SYNRG/gamma-synergin. Interacts with EPS15. Interacts (via GAE domain) with AP1AR (via coiled-coil domain). Interacts with CLN3 (via dileucine motif); this interaction facilitates lysosomal targeting. Interacts (via GAE domain) with AFTPH/aftiphilin; the interaction is required to recruit AFTPH/aftiphilin to the perinuclear region of the cell. In terms of tissue distribution, widely expressed.

The protein localises to the golgi apparatus. Its subcellular location is the cytoplasmic vesicle. It is found in the clathrin-coated vesicle membrane. It localises to the cytoplasm. The protein resides in the perinuclear region. The protein localises to the clathrin-coated vesicle. Its subcellular location is the membrane. It is found in the clathrin-coated pit. In terms of biological role, subunit of clathrin-associated adaptor protein complex 1 that plays a role in protein sorting in the late-Golgi/trans-Golgi network (TGN) and/or endosomes. The AP complexes mediate both the recruitment of clathrin to membranes and the recognition of sorting signals within the cytosolic tails of transmembrane cargo molecules. In association with AFTPH/aftiphilin in the aftiphilin/p200/gamma-synergin complex, involved in the trafficking of transferrin from early to recycling endosomes, and the membrane trafficking of furin and the lysosomal enzyme cathepsin D between the trans-Golgi network (TGN) and endosomes. The chain is AP-1 complex subunit gamma-1 (AP1G1) from Homo sapiens (Human).